The sequence spans 174 residues: Protein GrpE (174 aa).

Residues 1–35 form a disordered region; it reads MAQDIKNEEVEEVQEEEVVKTAEETTPEKSELDLA. Residues 17 to 35 show a composition bias toward basic and acidic residues; that stretch reads EVVKTAEETTPEKSELDLA.

The protein belongs to the GrpE family. In terms of assembly, homodimer.

The protein localises to the cytoplasm. Functionally, participates actively in the response to hyperosmotic and heat shock by preventing the aggregation of stress-denatured proteins, in association with DnaK and GrpE. It is the nucleotide exchange factor for DnaK and may function as a thermosensor. Unfolded proteins bind initially to DnaJ; upon interaction with the DnaJ-bound protein, DnaK hydrolyzes its bound ATP, resulting in the formation of a stable complex. GrpE releases ADP from DnaK; ATP binding to DnaK triggers the release of the substrate protein, thus completing the reaction cycle. Several rounds of ATP-dependent interactions between DnaJ, DnaK and GrpE are required for fully efficient folding. This Streptococcus pneumoniae serotype 4 (strain ATCC BAA-334 / TIGR4) protein is Protein GrpE.